The chain runs to 156 residues: ATP synthase subunit b (156 aa).

Residues 7–29 (LFAQMVVFLVLAWFTMKFVWPPL) form a helical membrane-spanning segment.

Belongs to the ATPase B chain family. As to quaternary structure, F-type ATPases have 2 components, F(1) - the catalytic core - and F(0) - the membrane proton channel. F(1) has five subunits: alpha(3), beta(3), gamma(1), delta(1), epsilon(1). F(0) has three main subunits: a(1), b(2) and c(10-14). The alpha and beta chains form an alternating ring which encloses part of the gamma chain. F(1) is attached to F(0) by a central stalk formed by the gamma and epsilon chains, while a peripheral stalk is formed by the delta and b chains.

The protein localises to the cell inner membrane. F(1)F(0) ATP synthase produces ATP from ADP in the presence of a proton or sodium gradient. F-type ATPases consist of two structural domains, F(1) containing the extramembraneous catalytic core and F(0) containing the membrane proton channel, linked together by a central stalk and a peripheral stalk. During catalysis, ATP synthesis in the catalytic domain of F(1) is coupled via a rotary mechanism of the central stalk subunits to proton translocation. In terms of biological role, component of the F(0) channel, it forms part of the peripheral stalk, linking F(1) to F(0). The chain is ATP synthase subunit b from Burkholderia vietnamiensis (strain G4 / LMG 22486) (Burkholderia cepacia (strain R1808)).